A 356-amino-acid polypeptide reads, in one-letter code: Phosphoribosylformylglycinamidine cyclo-ligase (356 aa).

The protein belongs to the AIR synthase family.

The protein localises to the cytoplasm. It catalyses the reaction 2-formamido-N(1)-(5-O-phospho-beta-D-ribosyl)acetamidine + ATP = 5-amino-1-(5-phospho-beta-D-ribosyl)imidazole + ADP + phosphate + H(+). It functions in the pathway purine metabolism; IMP biosynthesis via de novo pathway; 5-amino-1-(5-phospho-D-ribosyl)imidazole from N(2)-formyl-N(1)-(5-phospho-D-ribosyl)glycinamide: step 2/2. This is Phosphoribosylformylglycinamidine cyclo-ligase from Acinetobacter baylyi (strain ATCC 33305 / BD413 / ADP1).